Reading from the N-terminus, the 230-residue chain is Cytidylate kinase (230 aa).

Gly12–Thr20 provides a ligand contact to ATP.

This sequence belongs to the cytidylate kinase family. Type 1 subfamily.

Its subcellular location is the cytoplasm. It catalyses the reaction CMP + ATP = CDP + ADP. The catalysed reaction is dCMP + ATP = dCDP + ADP. In Aeromonas salmonicida (strain A449), this protein is Cytidylate kinase.